An 833-amino-acid polypeptide reads, in one-letter code: MSTGQEEHLDSKLENQISEEENQSQNQNFPTAIEDSIQASIEKLDEVDDEINPIEVKDEFPTTIGTTYDILHPREPFPKRIKLEETETEPDSNGIADNDQTMVVVPPKKPQLFYTPLKTGLVYDVRMRYHAKVFTSYSEYIDPHPEDPRRIYRIYKKLVEAGIVLDPSLAGINEIGPFMLKIPIREATSEEILQVHSEDHLKFIQSTEDMSRDQLLKETETGDSIYVNNDSYLSAKLSCGGTIEACKAVIEGRVKNSLAIVRPPGHHAEPNTPAGFCLFSNVAVAAKNMLKNYPESVRRIVIVDWDIHHGNGTQKAFYNDPRVLYISLHRFENGKFYPGTKYGDLNQVGEGPGEGFTINIPWRSSGMHDGDYVYAFNKIIQPVISEFDPDLIIVSSGFDAADGDVIGACHVTPAGYGYMTHTLKGIARGKLAVILEGGYNLDSISKSALAVAKVLVGEPPENTITLRPQAEAIEVVDEVIKIQSKYFKSLRNGIPNGIFEDVYDLADVEKSNYKLVNIADPIRSHQVEKLFNEKEFINIPIISSPSNGEKPPFTTDLPDQLEDLIVASPDIYNCTTIILTIHDPPEIWANINPTNGVIETNSTMVLEHPLVQIMDKIQKEKDPENQEKFGYLDINIPSFQLPIPGTTSESSTYNPIIFAQEVLLYIWDNYIAYFQQLKNLVMVGFGDSYQSIVNLYGKRPSNEIKDLIKGTVAFLNRTTLKPLIPVMDESMVDWYYQNSIIFTSNFNTCWTGGSGAGNGNGNGNGNNGNSSNGGGNKSADSNGHDDFSKRPRKKFGRVIKAKTDGLCDVIQEKFDEGVDFILDSIEDYSSSED.

A compositionally biased stretch (basic and acidic residues) spans 1-13 (MSTGQEEHLDSKL). Disordered stretches follow at residues 1-40 (MSTG…IQAS) and 760-791 (NGNG…SKRP). Residues 5–52 (QEEHLDSKLENQISEEENQSQNQNFPTAIEDSIQASIEKLDEVDDEIN) adopt a coiled-coil conformation. Over residues 760 to 776 (NGNGNGNNGNSSNGGGN) the composition is skewed to gly residues.

Belongs to the histone deacetylase family. HD type 2 subfamily. In terms of assembly, interacts with BRG1.

The protein localises to the nucleus. It catalyses the reaction N(6)-acetyl-L-lysyl-[histone] + H2O = L-lysyl-[histone] + acetate. Responsible for the deacetylation of lysine residues on the N-terminal part of the core histones (H2A, H2B, H3 and H4). Histone deacetylation gives a tag for epigenetic repression and plays an important role in transcriptional regulation, cell cycle progression and developmental events. Histone deacetylases act via the formation of large multiprotein complexes. Deacetylates the YNG2 subunit of NuA4 histone acetyltransferase (HAT) module, leading to the reduction of YNG2 and NuA4 HAT at the promoters of hypha-specific genes. Plays a key role in the regulation of filamentous growth and virulence. Involved in the switch between two heritable states, the white and opaque states. These two cell types differ in many characteristics, including cell structure, mating competence, and virulence. Each state is heritable for many generations, and switching between states occurs stochastically at low frequency. The polypeptide is Histone deacetylase HDA1 (HDA1) (Candida albicans (strain SC5314 / ATCC MYA-2876) (Yeast)).